Reading from the N-terminus, the 147-residue chain is Fibromodulin (147 aa).

LRR repeat units follow at residues 1–15 (LDHN…PLPR), 16–37 (SLRE…ALEG), 40–61 (NLTA…MRGL), 63–84 (SLIL…LPSA), 85–105 (LEQL…YFRG), and 108–128 (KLLY…ASNT). Residue asparagine 5 is glycosylated (N-linked (GlcNAc...) asparagine). Asparagine 40 carries N-linked (GlcNAc...) asparagine glycosylation. Asparagine 130 carries an N-linked (GlcNAc...) asparagine glycan. The stretch at 133 to 147 (SLLELDLSYNQLQKI) is one LRR 7 repeat.

This sequence belongs to the small leucine-rich proteoglycan (SLRP) family. SLRP class II subfamily. Binds to type I and type II collagen. Binds keratan sulfate chains. Post-translationally, sulfated on tyrosine residues. In terms of processing, the N-terminus is blocked by a pyrrolidone carboxylic acid generated by post-translational modification of N-terminal glutamine.

The protein localises to the secreted. It localises to the extracellular space. It is found in the extracellular matrix. In terms of biological role, affects the rate of fibrils formation. May have a primary role in collagen fibrillogenesis. The sequence is that of Fibromodulin (FMOD) from Oryctolagus cuniculus (Rabbit).